Consider the following 190-residue polypeptide: Glucose-6-phosphate isomerase (190 aa).

Residues histidine 89, histidine 91, glutamate 98, and histidine 137 each contribute to the Fe cation site.

It belongs to the archaeal-type GPI family. In terms of assembly, homodimer. Fe cation serves as cofactor.

It is found in the cytoplasm. It catalyses the reaction alpha-D-glucose 6-phosphate = beta-D-fructose 6-phosphate. Its pathway is carbohydrate degradation; glycolysis; D-glyceraldehyde 3-phosphate and glycerone phosphate from D-glucose: step 2/4. Inhibited by mannose 6-phosphate, fructose 1-phosphate and fructose 1,6-bisphosphate. Its activity is also inhibited by Cobalt (II) ions &lt; EDTA &lt; nickel (II) ions &lt; zinc (II) ions &lt;&lt; cadmium (II) ions &lt; copper (II) ions. Sodium and potassium ions and manganese ions show little or no effect on activity. The polypeptide is Glucose-6-phosphate isomerase (pgiA) (Thermococcus litoralis).